A 561-amino-acid polypeptide reads, in one-letter code: DNA ligase B (561 aa).

The N6-AMP-lysine intermediate role is filled by lysine 125.

The protein belongs to the NAD-dependent DNA ligase family. LigB subfamily.

It catalyses the reaction NAD(+) + (deoxyribonucleotide)n-3'-hydroxyl + 5'-phospho-(deoxyribonucleotide)m = (deoxyribonucleotide)n+m + AMP + beta-nicotinamide D-nucleotide.. Functionally, catalyzes the formation of phosphodiester linkages between 5'-phosphoryl and 3'-hydroxyl groups in double-stranded DNA using NAD as a coenzyme and as the energy source for the reaction. This Salmonella dublin (strain CT_02021853) protein is DNA ligase B.